Consider the following 348-residue polypeptide: 3-keto-steroid reductase (348 aa).

NADP(+) contacts are provided by L18, V37, T41, R47, and R163. Catalysis depends on proton donor residues S180 and Y203. The NADP(+) site is built by Y203, K207, and S238. K207 (lowers pKa of active site Tyr) is an active-site residue.

Belongs to the short-chain dehydrogenases/reductases (SDR) family. ERG27 subfamily.

It catalyses the reaction a 3beta-hydroxysteroid + NADP(+) = a 3-oxosteroid + NADPH + H(+). Its pathway is steroid biosynthesis; zymosterol biosynthesis; zymosterol from lanosterol: step 5/6. In terms of biological role, responsible for the reduction of the keto group on the C-3 of sterols. This is 3-keto-steroid reductase (ERG27) from Eremothecium gossypii (strain ATCC 10895 / CBS 109.51 / FGSC 9923 / NRRL Y-1056) (Yeast).